The sequence spans 286 residues: Diaminopimelate epimerase (286 aa).

Residues asparagine 13 and asparagine 66 each coordinate substrate. Cysteine 75 acts as the Proton donor in catalysis. Substrate contacts are provided by residues 76–77 (GN), asparagine 165, asparagine 198, and 216–217 (ER). Cysteine 225 functions as the Proton acceptor in the catalytic mechanism. 226–227 (GT) is a binding site for substrate.

Belongs to the diaminopimelate epimerase family. As to quaternary structure, homodimer.

Its subcellular location is the cytoplasm. The catalysed reaction is (2S,6S)-2,6-diaminopimelate = meso-2,6-diaminopimelate. The protein operates within amino-acid biosynthesis; L-lysine biosynthesis via DAP pathway; DL-2,6-diaminopimelate from LL-2,6-diaminopimelate: step 1/1. Catalyzes the stereoinversion of LL-2,6-diaminopimelate (L,L-DAP) to meso-diaminopimelate (meso-DAP), a precursor of L-lysine and an essential component of the bacterial peptidoglycan. The polypeptide is Diaminopimelate epimerase (Thermosynechococcus vestitus (strain NIES-2133 / IAM M-273 / BP-1)).